Here is a 224-residue protein sequence, read N- to C-terminus: UPF0758 protein PSPTO_0086 (224 aa).

One can recognise an MPN domain in the interval 102–224 (ALENPAQVRN…PLSMVEKGLM (123 aa)). The Zn(2+) site is built by His173, His175, and Asp186. The JAMM motif signature appears at 173–186 (HNHPSGITTPSRSD).

This sequence belongs to the UPF0758 family.

This is UPF0758 protein PSPTO_0086 from Pseudomonas syringae pv. tomato (strain ATCC BAA-871 / DC3000).